A 393-amino-acid chain; its full sequence is Lysine/ornithine decarboxylase (393 aa).

An N6-(pyridoxal phosphate)lysine modification is found at K51. C323 (proton donor; shared with dimeric partner) is an active-site residue.

The protein belongs to the Orn/Lys/Arg decarboxylase class-II family. Homodimer. The cofactor is pyridoxal 5'-phosphate.

The enzyme catalyses L-lysine + H(+) = cadaverine + CO2. The catalysed reaction is L-ornithine + H(+) = putrescine + CO2. It functions in the pathway amine and polyamine biosynthesis; putrescine biosynthesis via L-ornithine pathway; putrescine from L-ornithine: step 1/1. With respect to regulation, inhibited competitively by both alpha-difluoromethyllysine and alpha-difluoromethylornithine. Decarboxylates both L-lysine and L-ornithine with similar catalytic efficiency. This chain is Lysine/ornithine decarboxylase (ldc), found in Selenomonas ruminantium.